Reading from the N-terminus, the 350-residue chain is UDP-3-O-acylglucosamine N-acyltransferase (350 aa).

The Proton acceptor role is filled by His-251.

The protein belongs to the transferase hexapeptide repeat family. LpxD subfamily. Homotrimer.

It carries out the reaction a UDP-3-O-[(3R)-3-hydroxyacyl]-alpha-D-glucosamine + a (3R)-hydroxyacyl-[ACP] = a UDP-2-N,3-O-bis[(3R)-3-hydroxyacyl]-alpha-D-glucosamine + holo-[ACP] + H(+). It functions in the pathway bacterial outer membrane biogenesis; LPS lipid A biosynthesis. Its function is as follows. Catalyzes the N-acylation of UDP-3-O-acylglucosamine using 3-hydroxyacyl-ACP as the acyl donor. Is involved in the biosynthesis of lipid A, a phosphorylated glycolipid that anchors the lipopolysaccharide to the outer membrane of the cell. In Prochlorococcus marinus (strain NATL2A), this protein is UDP-3-O-acylglucosamine N-acyltransferase.